A 300-amino-acid polypeptide reads, in one-letter code: Tyrosine recombinase XerC (300 aa).

Residues 2 to 88 form the Core-binding (CB) domain; that stretch reads ENVNFTLNLF…SLRSFYKFLL (87 aa). Positions 109–294 constitute a Tyr recombinase domain; sequence KIPHFLYPDE…TKDHLRYVYL (186 aa). Catalysis depends on residues R149, K173, H246, R249, and H272. Y281 acts as the O-(3'-phospho-DNA)-tyrosine intermediate in catalysis.

This sequence belongs to the 'phage' integrase family. XerC subfamily. In terms of assembly, forms a cyclic heterotetrameric complex composed of two molecules of XerC and two molecules of XerD.

It localises to the cytoplasm. In terms of biological role, site-specific tyrosine recombinase, which acts by catalyzing the cutting and rejoining of the recombining DNA molecules. The XerC-XerD complex is essential to convert dimers of the bacterial chromosome into monomers to permit their segregation at cell division. It also contributes to the segregational stability of plasmids. The sequence is that of Tyrosine recombinase XerC from Anoxybacillus flavithermus (strain DSM 21510 / WK1).